A 680-amino-acid polypeptide reads, in one-letter code: tRNA 5-methylaminomethyl-2-thiouridine biosynthesis bifunctional protein MnmC (680 aa).

The segment at 1–267 is tRNA (mnm(5)s(2)U34)-methyltransferase; that stretch reads MTAEPNKPCQ…MAAILSSDAP (267 aa). Residues 273 to 680 form an FAD-dependent cmnm(5)s(2)U34 oxidoreductase region; sequence IGGGLASAHL…LRKLLKGKAL (408 aa).

It in the N-terminal section; belongs to the methyltransferase superfamily. tRNA (mnm(5)s(2)U34)-methyltransferase family. In the C-terminal section; belongs to the DAO family. FAD is required as a cofactor.

It localises to the cytoplasm. The catalysed reaction is 5-aminomethyl-2-thiouridine(34) in tRNA + S-adenosyl-L-methionine = 5-methylaminomethyl-2-thiouridine(34) in tRNA + S-adenosyl-L-homocysteine + H(+). Functionally, catalyzes the last two steps in the biosynthesis of 5-methylaminomethyl-2-thiouridine (mnm(5)s(2)U) at the wobble position (U34) in tRNA. Catalyzes the FAD-dependent demodification of cmnm(5)s(2)U34 to nm(5)s(2)U34, followed by the transfer of a methyl group from S-adenosyl-L-methionine to nm(5)s(2)U34, to form mnm(5)s(2)U34. The sequence is that of tRNA 5-methylaminomethyl-2-thiouridine biosynthesis bifunctional protein MnmC from Shewanella putrefaciens (strain CN-32 / ATCC BAA-453).